A 621-amino-acid chain; its full sequence is Kelch-like protein 40 (621 aa).

One can recognise a BTB domain in the interval 33–98 (LDCVVRAGER…LYTSEIALDE (66 aa)). One can recognise a BACK domain in the interval 133 to 239 (CLAVFRLGLL…PRAFLESRVE (107 aa)). Residues 265–295 (ITTLRKKKKGKDGAGAKEADKGTSKAKAEED) form a disordered region. Positions 275 to 292 (KDGAGAKEADKGTSKAKA) are enriched in basic and acidic residues. Kelch repeat units lie at residues 360-412 (QVFV…EALN), 413-462 (SIYV…SHMD), 463-510 (LVYV…VHDG), 512-557 (IIVA…SLVG), and 559-613 (LYAI…PVRL).

This sequence belongs to the KLHL40 family. As to quaternary structure, component of the BCR(KLHL40) E3 ubiquitin ligase complex, at least composed of CUL3, KLHL40 and RBX1. Interacts with LMOD3. Highly expressed in fetal (19, 23 and 31 weeks of gestation) and adult skeletal muscle; expression levels tend to be higher in fetal compared to postnatal muscles (at protein level). Also expressed in fetal and adult heart.

The protein localises to the cytoplasm. It localises to the myofibril. It is found in the sarcomere. The protein resides in the a band. Its subcellular location is the i band. Functionally, substrate-specific adapter of a BCR (BTB-CUL3-RBX1) E3 ubiquitin ligase complex that acts as a key regulator of skeletal muscle development. The BCR(KLHL40) complex acts by mediating ubiquitination and degradation of TFDP1, thereby regulating the activity of the E2F:DP transcription factor complex. Promotes stabilization of LMOD3 by acting as a negative regulator of LMOD3 ubiquitination; the molecular process by which it negatively regulates ubiquitination of LMOD3 is however unclear. This chain is Kelch-like protein 40, found in Homo sapiens (Human).